The following is a 148-amino-acid chain: ATP synthase epsilon chain (148 aa).

Belongs to the ATPase epsilon chain family. As to quaternary structure, F-type ATPases have 2 components, CF(1) - the catalytic core - and CF(0) - the membrane proton channel. CF(1) has five subunits: alpha(3), beta(3), gamma(1), delta(1), epsilon(1). CF(0) has three main subunits: a, b and c.

The protein resides in the cell membrane. Functionally, produces ATP from ADP in the presence of a proton gradient across the membrane. The protein is ATP synthase epsilon chain of Streptococcus thermophilus (strain ATCC BAA-491 / LMD-9).